Consider the following 499-residue polypeptide: Aldehyde dehydrogenase 1 (499 aa).

NAD(+) is bound by residues 164-166, 164-167, 190-193, 223-224, 243-244, 243-248, and 266-268; these read IPW, IPWN, KPAE, GS, GSTKVG, and ELG. Glu266 functions as the Proton acceptor in the catalytic mechanism. Catalysis depends on Cys300, which acts as the Nucleophile. NAD(+) contacts are provided by residues 346–350 and 397–399; these read QQYEK and EIF.

The protein belongs to the aldehyde dehydrogenase family. In terms of assembly, homotetramer. As to expression, expressed in flowers and disk florets.

It carries out the reaction an aldehyde + NAD(+) + H2O = a carboxylate + NADH + 2 H(+). The enzyme catalyses an aldehyde + NADP(+) + H2O = a carboxylate + NADPH + 2 H(+). It catalyses the reaction octanal + NADP(+) + H2O = octanoate + NADPH + 2 H(+). The catalysed reaction is (1R,3R)-chrysanthemal + NAD(+) + H2O = (1R,3R)-chrysanthemate + NADH + 2 H(+). It carries out the reaction (1R,3R)-chrysanthemal + NADP(+) + H2O = (1R,3R)-chrysanthemate + NADPH + 2 H(+). The enzyme catalyses (E)-hept-2-enal + NADP(+) + H2O = (E)-hept-2-enoate + NADPH + 2 H(+). It catalyses the reaction dodecanal + NADP(+) + H2O = dodecanoate + NADPH + 2 H(+). The catalysed reaction is citral + NADP(+) + H2O = 3,7-dimethylocta-2,6-dienoate + NADPH + 2 H(+). It carries out the reaction perillyl aldehyde + NADP(+) + H2O = perillate + NADPH + 2 H(+). The enzyme catalyses (2E,6E)-farnesal + NADP(+) + H2O = (2E,6E)-farnesoate + NADPH + 2 H(+). It catalyses the reaction (S)-(-)-citronellal + NADP(+) + H2O = (S)-(-)-citronellate + NADPH + 2 H(+). It participates in isoprenoid biosynthesis. Functionally, component of the monoterpenoid pyrethrins biosynthesis; pyrethrins are widely used plant-derived pesticide. Mediates the conversion of trans-chrysanthemal into trans-chrysanthemic acid. Can also use octanal, hept-2-enal, dodecanal, citral, farnesal, citronellal and perillyl aldehyde as substrates. In Tanacetum cinerariifolium (Dalmatian daisy), this protein is Aldehyde dehydrogenase 1.